The sequence spans 294 residues: ATP synthase gamma chain (294 aa).

The protein belongs to the ATPase gamma chain family. F-type ATPases have 2 components, CF(1) - the catalytic core - and CF(0) - the membrane proton channel. CF(1) has five subunits: alpha(3), beta(3), gamma(1), delta(1), epsilon(1). CF(0) has three main subunits: a, b and c.

The protein localises to the cell inner membrane. In terms of biological role, produces ATP from ADP in the presence of a proton gradient across the membrane. The gamma chain is believed to be important in regulating ATPase activity and the flow of protons through the CF(0) complex. The protein is ATP synthase gamma chain of Rhizobium rhizogenes (strain K84 / ATCC BAA-868) (Agrobacterium radiobacter).